Consider the following 351-residue polypeptide: MATTGRVLLLSPPSLSSHPEKLNTVLKSHTRDKTDLQMLDRLAHGLVSLPESTYDIVLLLTGADNTLAETHSLLNRELIQRVVHSLRPAGKLRNRENKPWGLSDGNGNNANSSRRYNDDEQRFRNEVILAGLVFDDKGELLKPDIGAQQAIPLKLGRRRKEKEKTDTLASSANYITNGTVDAPASNGISAPIPAAKTTENNPVPPGVGFIDFSDDFGMPAEDDLEDSDEELIDEDELLDEDDMGRQIVQPPECRPKPGKRRRACKDCSCGLSQKLEAKDKAQRATADKALETMKLGSSELAEVDFTVQGKVGSCGNCSLGDAFRCDGCPYIGLPAFKQGEEVRLLNNDVQL.

Positions 1 to 151 (MATTGRVLLL…KPDIGAQQAI (151 aa)) are N-terminal SAM-like domain. The interval 93-118 (RNRENKPWGLSDGNGNNANSSRRYND) is disordered. Polar residues predominate over residues 105-114 (GNGNNANSSR). The interval 152-243 (PLKLGRRRKE…EDELLDEDDM (92 aa)) is linker. Cys253, Cys264, Cys267, and Cys269 together coordinate [2Fe-2S] cluster. The segment at 253–269 (CRPKPGKRRRACKDCSC) is fe-S binding site A. [4Fe-4S] cluster-binding residues include Cys314, Cys317, Cys325, and Cys328. 2 consecutive short sequence motifs (cx2C motif) follow at residues 314–317 (CGNC) and 325–328 (CDGC). The tract at residues 314 to 328 (CGNCSLGDAFRCDGC) is fe-S binding site B.

This sequence belongs to the anamorsin family. As to quaternary structure, monomer. Interacts with TAH18. Interacts with MIA40. [2Fe-2S] cluster serves as cofactor. It depends on [4Fe-4S] cluster as a cofactor.

The protein localises to the cytoplasm. It is found in the mitochondrion intermembrane space. Component of the cytosolic iron-sulfur (Fe-S) protein assembly (CIA) machinery required for the maturation of extramitochondrial Fe-S proteins. Part of an electron transfer chain functioning in an early step of cytosolic Fe-S biogenesis, facilitating the de novo assembly of a [4Fe-4S] cluster on the scaffold complex CFD1-NBP35. Electrons are transferred to DRE2 from NADPH via the FAD- and FMN-containing protein TAH18. TAH18-DRE2 are also required for the assembly of the diferric tyrosyl radical cofactor of ribonucleotide reductase (RNR), probably by providing electrons for reduction during radical cofactor maturation in the catalytic small subunit RNR2. The sequence is that of Fe-S cluster assembly protein DRE2 from Ajellomyces capsulatus (strain H143) (Darling's disease fungus).